A 192-amino-acid polypeptide reads, in one-letter code: Ion-translocating oxidoreductase complex subunit B (192 aa).

The hydrophobic stretch occupies residues Met-1–Ser-26. The region spanning Glu-32–Val-91 is the 4Fe-4S domain. [4Fe-4S] cluster is bound by residues Cys-49, Cys-52, Cys-57, Cys-74, Cys-117, Cys-120, Cys-123, Cys-127, Cys-147, Cys-150, Cys-153, and Cys-157. 4Fe-4S ferredoxin-type domains lie at Met-108–Arg-137 and Val-138–Val-167.

The protein belongs to the 4Fe4S bacterial-type ferredoxin family. RnfB subfamily. As to quaternary structure, the complex is composed of six subunits: RsxA, RsxB, RsxC, RsxD, RsxE and RsxG. [4Fe-4S] cluster is required as a cofactor.

The protein resides in the cell inner membrane. Its function is as follows. Part of a membrane-bound complex that couples electron transfer with translocation of ions across the membrane. Required to maintain the reduced state of SoxR. The protein is Ion-translocating oxidoreductase complex subunit B of Shigella boydii serotype 4 (strain Sb227).